The following is a 510-amino-acid chain: Protein phosphatase EYA3 (510 aa).

Disordered stretches follow at residues 1-32 and 175-233; these read MQEP…SNLS and YQTE…DASS. Polar residues predominate over residues 7–16; that stretch reads QTLSQVNNPD. A compositionally biased stretch (low complexity) spans 192 to 203; it reads LPSDSSASPPLS. Ser-199 and Ser-203 each carry phosphoserine. The Nucleophile role is filled by Asp-246. Mg(2+) is bound by residues Asp-246 and Asp-248. Residue Asp-248 is the Proton donor of the active site. Phosphoserine occurs at positions 375 and 409. Position 474 (Asp-474) interacts with Mg(2+).

It belongs to the HAD-like hydrolase superfamily. EYA family. As to quaternary structure, interacts with SIX1 and DACH1, and probably SIX2, SIX4 and SIX5. The cofactor is Mg(2+). In terms of processing, ser-203 phosphorylation is required for localization at sites of DNA damage and directing interaction with H2AX. Expressed in branchial arches, CNS and developing eye.

The protein localises to the cytoplasm. It localises to the nucleus. It carries out the reaction O-phospho-L-tyrosyl-[protein] + H2O = L-tyrosyl-[protein] + phosphate. Tyrosine phosphatase that specifically dephosphorylates 'Tyr-142' of histone H2AX (H2AXY142ph). 'Tyr-142' phosphorylation of histone H2AX plays a central role in DNA repair and acts as a mark that distinguishes between apoptotic and repair responses to genotoxic stress. Promotes efficient DNA repair by dephosphorylating H2AX, promoting the recruitment of DNA repair complexes containing MDC1. Its function as histone phosphatase probably explains its role in transcription regulation during organogenesis. The phosphatase activity has been shown in vitro. Coactivates SIX1. Seems to coactivate SIX2, SIX4 and SIX5. The repression of precursor cell proliferation in myoblasts by SIX1 is switched to activation through recruitment of EYA3 to the SIX1-DACH1 complex and seems to be dependent on EYA3 phosphatase activity. May be involved in development of the eye. May play a role in mediating the induction and differentiation of cranial placodes. The sequence is that of Protein phosphatase EYA3 (Eya3) from Mus musculus (Mouse).